A 433-amino-acid chain; its full sequence is Xylose isomerase (433 aa).

Catalysis depends on residues His-97 and Asp-100. Positions 228, 264, 267, 292, 303, 305, and 334 each coordinate Mg(2+).

The protein belongs to the xylose isomerase family. In terms of assembly, homotetramer. Mg(2+) is required as a cofactor.

The protein localises to the cytoplasm. It carries out the reaction alpha-D-xylose = alpha-D-xylulofuranose. This chain is Xylose isomerase, found in Fervidobacterium gondwanense.